The primary structure comprises 227 residues: Cytidylate kinase (227 aa).

10-18 (GPASSGKST) serves as a coordination point for ATP.

This sequence belongs to the cytidylate kinase family. Type 1 subfamily.

It localises to the cytoplasm. The enzyme catalyses CMP + ATP = CDP + ADP. It catalyses the reaction dCMP + ATP = dCDP + ADP. The chain is Cytidylate kinase from Streptococcus agalactiae serotype Ia (strain ATCC 27591 / A909 / CDC SS700).